Consider the following 77-residue polypeptide: MADTLERVTKIIVDRLGVDEADVKLEASFKEDLGADSLDVVELVMELEDEFDMEISDEDAEKIATVGDAVNYIQNQQ.

One can recognise a Carrier domain in the interval 2-77 (ADTLERVTKI…DAVNYIQNQQ (76 aa)). S37 carries the O-(pantetheine 4'-phosphoryl)serine modification.

The protein belongs to the acyl carrier protein (ACP) family. Post-translationally, 4'-phosphopantetheine is transferred from CoA to a specific serine of apo-ACP by AcpS. This modification is essential for activity because fatty acids are bound in thioester linkage to the sulfhydryl of the prosthetic group.

The protein resides in the cytoplasm. It participates in lipid metabolism; fatty acid biosynthesis. In terms of biological role, carrier of the growing fatty acid chain in fatty acid biosynthesis. In Bacillus subtilis (strain 168), this protein is Acyl carrier protein (acpA).